The following is a 224-amino-acid chain: Inhibitor of apoptosis protein (224 aa).

One copy of the BIR repeat lies at 29–92 (VDARNKSFAI…GFWSRNCGFM (64 aa)). Zn(2+)-binding residues include Cys-62, Cys-65, His-82, and Cys-89. The C4-type zinc-finger motif lies at 189 to 207 (CMTCGIEQINKDENFCSAC).

The protein belongs to the asfivirus IAP family. In terms of assembly, interacts with subunit p17 of host CASP3.

Its subcellular location is the host cytoplasm. The protein resides in the virion. Its function is as follows. Prevents apoptosis of host cell by inhibiting caspase-3/CASP3 activation to promote the viral replication. Also induces the activation of host NF-kappaB. This chain is Inhibitor of apoptosis protein, found in Ornithodoros (relapsing fever ticks).